The sequence spans 305 residues: Glycine--tRNA ligase alpha subunit (305 aa).

The protein belongs to the class-II aminoacyl-tRNA synthetase family. Tetramer of two alpha and two beta subunits.

It is found in the cytoplasm. It carries out the reaction tRNA(Gly) + glycine + ATP = glycyl-tRNA(Gly) + AMP + diphosphate. The sequence is that of Glycine--tRNA ligase alpha subunit from Streptococcus pneumoniae (strain ATCC BAA-255 / R6).